The following is a 61-amino-acid chain: Metallothionein-1F (61 aa).

Position 1 is an N-acetylmethionine (methionine 1). The tract at residues methionine 1–cysteine 29 is beta. Positions 5, 7, 13, 15, 19, 21, 24, 26, 29, 33, 34, 36, 37, 41, 44, 48, 50, and 57 each coordinate a divalent metal cation. Residues lysine 30 to aspartate 61 form an alpha region. Serine 58 is modified (phosphoserine). Residues cysteine 59 and cysteine 60 each contribute to the a divalent metal cation site.

This sequence belongs to the metallothionein superfamily. Type 1 family. As to quaternary structure, monomer.

Metallothioneins have a high content of cysteine residues that bind various heavy metals; these proteins are transcriptionally regulated by both heavy metals and glucocorticoids. The sequence is that of Metallothionein-1F (MT1F) from Homo sapiens (Human).